Consider the following 199-residue polypeptide: Recombination protein RecR (199 aa).

The segment at 57–72 (CQSCRTFTEQDLCPIC) adopts a C4-type zinc-finger fold. Residues 81–176 (GIICVVETPA…VISRIAHGVP (96 aa)) enclose the Toprim domain.

Belongs to the RecR family.

Functionally, may play a role in DNA repair. It seems to be involved in an RecBC-independent recombinational process of DNA repair. It may act with RecF and RecO. The sequence is that of Recombination protein RecR from Shewanella frigidimarina (strain NCIMB 400).